The primary structure comprises 181 residues: Acireductone dioxygenase (181 aa).

4 residues coordinate Fe(2+): His-97, His-99, Glu-103, and His-141. Residues His-97, His-99, Glu-103, and His-141 each contribute to the Ni(2+) site.

Belongs to the acireductone dioxygenase (ARD) family. In terms of assembly, monomer. It depends on Fe(2+) as a cofactor. Ni(2+) is required as a cofactor.

The enzyme catalyses 1,2-dihydroxy-5-(methylsulfanyl)pent-1-en-3-one + O2 = 3-(methylsulfanyl)propanoate + CO + formate + 2 H(+). It carries out the reaction 1,2-dihydroxy-5-(methylsulfanyl)pent-1-en-3-one + O2 = 4-methylsulfanyl-2-oxobutanoate + formate + 2 H(+). It participates in amino-acid biosynthesis; L-methionine biosynthesis via salvage pathway; L-methionine from S-methyl-5-thio-alpha-D-ribose 1-phosphate: step 5/6. Its function is as follows. Catalyzes 2 different reactions between oxygen and the acireductone 1,2-dihydroxy-3-keto-5-methylthiopentene (DHK-MTPene) depending upon the metal bound in the active site. Fe-containing acireductone dioxygenase (Fe-ARD) produces formate and 2-keto-4-methylthiobutyrate (KMTB), the alpha-ketoacid precursor of methionine in the methionine recycle pathway. Ni-containing acireductone dioxygenase (Ni-ARD) produces methylthiopropionate, carbon monoxide and formate, and does not lie on the methionine recycle pathway. This is Acireductone dioxygenase from Pseudomonas syringae pv. syringae (strain B728a).